The following is a 340-amino-acid chain: Glycerol-3-phosphate dehydrogenase [NAD(P)+] (340 aa).

NADPH contacts are provided by S11, W12, R33, and K106. The sn-glycerol 3-phosphate site is built by K106, G137, and S139. A141 is an NADPH binding site. K192, D245, S255, R256, and N257 together coordinate sn-glycerol 3-phosphate. The active-site Proton acceptor is K192. R256 lines the NADPH pocket. Residues V280 and E282 each coordinate NADPH.

This sequence belongs to the NAD-dependent glycerol-3-phosphate dehydrogenase family.

It is found in the cytoplasm. It carries out the reaction sn-glycerol 3-phosphate + NAD(+) = dihydroxyacetone phosphate + NADH + H(+). The catalysed reaction is sn-glycerol 3-phosphate + NADP(+) = dihydroxyacetone phosphate + NADPH + H(+). It functions in the pathway membrane lipid metabolism; glycerophospholipid metabolism. Catalyzes the reduction of the glycolytic intermediate dihydroxyacetone phosphate (DHAP) to sn-glycerol 3-phosphate (G3P), the key precursor for phospholipid synthesis. The sequence is that of Glycerol-3-phosphate dehydrogenase [NAD(P)+] from Bacillus anthracis (strain A0248).